We begin with the raw amino-acid sequence, 153 residues long: UPF0735 ACT domain-containing protein FN1487 (153 aa).

The ACT domain maps to 76 to 152; it reads SLHLSLKDRV…GIADIRITGS (77 aa).

It belongs to the UPF0735 family.

This Fusobacterium nucleatum subsp. nucleatum (strain ATCC 25586 / DSM 15643 / BCRC 10681 / CIP 101130 / JCM 8532 / KCTC 2640 / LMG 13131 / VPI 4355) protein is UPF0735 ACT domain-containing protein FN1487.